Consider the following 441-residue polypeptide: Leucine-rich repeat-containing protein 17 (441 aa).

Positions 1-18 are cleaved as a signal peptide; sequence MRVVTIVILLCFCKAAEL. LRR repeat units lie at residues 82–103, 106–127, and 130–151; these read DLLH…MFSK, KLKS…AFFG, and KLTT…VFIY. The 52-residue stretch at 163-214 folds into the LRRCT 1 domain; it reads NPWHCTCEIETLISMLQIPRNRNLGNYAKCESPQEQKNKKLRQIKSEQLCNE. One can recognise an LRRNT domain in the interval 225-268; it reads QVSGRPPVIKPEVDSTFCHNYVFPIQTLDCKRKELKKVPNNIPP. 3 LRR repeats span residues 269-290, 293-314, and 317-340; these read DIVK…EFED, ELKK…AFLG, and HLEE…EDLY. Positions 350–402 constitute an LRRCT 2 domain; the sequence is NPWRCDYNIHYLYYWLKHHYNVHFNGLECKTPEEYKGWSVGKYIRSYYEECPK.

Expressed in osteoblast cell lines. Well expressed in ovary, heart, pancreas, skeletal muscle, lung, and fetal kidney and lung and only at the basal levels in the other tissues examined including adult kidney. More expressed in S-type neuroblastoma cells than in N-type neuroblastoma cells.

It is found in the secreted. The protein localises to the extracellular space. Functionally, involved in bone homeostasis. Acts as a negative regulator of RANKL-induced osteoclast precursor differentiation from bone marrow precursors. The chain is Leucine-rich repeat-containing protein 17 (LRRC17) from Homo sapiens (Human).